The chain runs to 170 residues: Two-component response regulator ORR6 (170 aa).

One can recognise a Response regulatory domain in the interval 51–170 (HVLAVDDSSV…DVSRLCSRIR (120 aa)). D103 is subject to 4-aspartylphosphate.

The protein belongs to the ARR family. Type-A subfamily. In terms of processing, two-component system major event consists of a His-to-Asp phosphorelay between a sensor histidine kinase (HK) and a response regulator (RR). In plants, the His-to-Asp phosphorelay involves an additional intermediate named Histidine-containing phosphotransfer protein (HPt). This multistep phosphorelay consists of a His-Asp-His-Asp sequential transfer of a phosphate group between first a His and an Asp of the HK protein, followed by the transfer to a conserved His of the HPt protein and finally the transfer to an Asp in the receiver domain of the RR protein. As to expression, expressed in roots, leaf blades, leaf sheaths, shoot apex, flowers and panicles.

In terms of biological role, functions as a response regulator involved in His-to-Asp phosphorelay signal transduction system. Phosphorylation of the Asp residue in the receiver domain activates the ability of the protein to promote the transcription of target genes. Type-A response regulators seem to act as negative regulators of the cytokinin signaling. This chain is Two-component response regulator ORR6, found in Oryza sativa subsp. japonica (Rice).